Consider the following 187-residue polypeptide: Flavin prenyltransferase UbiX (187 aa).

FMN-binding positions include 9–11 (GAS), Ser-34, and Arg-123. Dimethylallyl phosphate-binding residues include Tyr-153 and Lys-169.

It belongs to the UbiX/PAD1 family.

The enzyme catalyses dimethylallyl phosphate + FMNH2 = prenylated FMNH2 + phosphate. Functionally, flavin prenyltransferase that catalyzes the synthesis of the prenylated FMN cofactor (prenyl-FMN) for 4-hydroxy-3-polyprenylbenzoic acid decarboxylase UbiD. The prenyltransferase is metal-independent and links a dimethylallyl moiety from dimethylallyl monophosphate (DMAP) to the flavin N5 and C6 atoms of FMN. The sequence is that of Flavin prenyltransferase UbiX from Helicobacter pylori (strain J99 / ATCC 700824) (Campylobacter pylori J99).